A 552-amino-acid chain; its full sequence is Cochlin (552 aa).

The N-terminal stretch at 1–26 is a signal peptide; the sequence is MPSSRIPALCLGAWLLLLLLPRFARA. The LCCL domain maps to 30–123; sequence VPIPVTCFTR…QMLSRWSASF (94 aa). Disulfide bonds link cysteine 36-cysteine 52 and cysteine 56-cysteine 76. The N-linked (GlcNAc...) asparagine glycan is linked to asparagine 102. Residues 129–161 are disordered; the sequence is KSSTQEATGRAVSTAHPPSGKRLKKTPEKKTGN. 2 VWFA domains span residues 167–352 and 369–539; these read DIAF…VQKL and NIAF…VSDV. A glycan (N-linked (GlcNAc...) asparagine) is linked at asparagine 223.

Monomer. May form homodimer. Interacts with type II collagen. Interacts with SLC44A2. Interacts with ANXA2. In terms of processing, N-glycosylated. Expressed in inner ear structures.

The protein localises to the secreted. It localises to the extracellular space. Plays a role in the control of cell shape and motility in the trabecular meshwork. This is Cochlin (Coch) from Mus musculus (Mouse).